The chain runs to 177 residues: MAKEIKKIISIPEGVTVTFEKNVLSASGPKGTNTRFLWYPGVNIEVNGSEIIVDSASSRKKQKAMVGTYTSHITNMMKGVVDGFEYHMKVVYSHFPMQIKVNGKKFVINNFLGEKKPRVSNILGETSVKASGDEVIVSGINKEDVGQTAANIEQKTKIKRFDPRVFQDGIYIVDKRV.

This sequence belongs to the universal ribosomal protein uL6 family. Part of the 50S ribosomal subunit.

Functionally, this protein binds to the 23S rRNA, and is important in its secondary structure. It is located near the subunit interface in the base of the L7/L12 stalk, and near the tRNA binding site of the peptidyltransferase center. The chain is Large ribosomal subunit protein uL6 from Methanococcoides burtonii (strain DSM 6242 / NBRC 107633 / OCM 468 / ACE-M).